Reading from the N-terminus, the 165-residue chain is Putative BTB/POZ domain-containing protein At2g40440 (165 aa).

Positions 24-98 (VDVRLKAGDS…IYSDGSMLSA (75 aa)) constitute a BTB domain.

The protein operates within protein modification; protein ubiquitination. In terms of biological role, may act as a substrate-specific adapter of an E3 ubiquitin-protein ligase complex (CUL3-RBX1-BTB) which mediates the ubiquitination and subsequent proteasomal degradation of target proteins. This chain is Putative BTB/POZ domain-containing protein At2g40440, found in Arabidopsis thaliana (Mouse-ear cress).